Reading from the N-terminus, the 1040-residue chain is Vitamin B12-dependent ribonucleotide reductase (1040 aa).

Substrate-binding positions include Ser169, 213–214 (AC), Gly242, 420–424 (NPCSE), and 604–608 (PTGTI). Cysteines 214 and 433 form a disulfide. Asn420 serves as the catalytic Proton acceptor. Cys422 (cysteine radical intermediate) is an active-site residue. The Proton acceptor role is filled by Glu424. 2 disordered regions span residues 909-932 (SAEGAAKTGGNGPDLTTAPAGATA) and 969-988 (GSATNGHSNGQSAGGSSDGA). The segment covering 969–979 (GSATNGHSNGQ) has biased composition (polar residues).

This sequence belongs to the ribonucleoside diphosphate reductase class-2 family. It depends on adenosylcob(III)alamin as a cofactor.

It catalyses the reaction a 2'-deoxyribonucleoside 5'-diphosphate + [thioredoxin]-disulfide + H2O = a ribonucleoside 5'-diphosphate + [thioredoxin]-dithiol. Catalyzes the reduction of ribonucleotides to deoxyribonucleotides. May function to provide a pool of deoxyribonucleotide precursors for DNA repair during oxygen limitation and/or for immediate growth after restoration of oxygen. The polypeptide is Vitamin B12-dependent ribonucleotide reductase (nrdJ) (Rhodopirellula baltica (strain DSM 10527 / NCIMB 13988 / SH1)).